We begin with the raw amino-acid sequence, 291 residues long: Undecaprenyl-diphosphatase (291 aa).

Helical transmembrane passes span 1–21, 48–68, 102–122, 126–146, 162–182, 203–223, 236–256, and 267–287; these read MFII…LTEF, SAFT…AWVF, LHVL…DDFI, LFSV…MIIA, INYF…WPGF, SDFT…LSLL, FYIL…KTFL, and FAIY…GFGI.

The protein belongs to the UppP family.

It is found in the cell membrane. It carries out the reaction di-trans,octa-cis-undecaprenyl diphosphate + H2O = di-trans,octa-cis-undecaprenyl phosphate + phosphate + H(+). Catalyzes the dephosphorylation of undecaprenyl diphosphate (UPP). Confers resistance to bacitracin. The polypeptide is Undecaprenyl-diphosphatase (Staphylococcus aureus (strain MSSA476)).